The primary structure comprises 668 residues: WD repeat-containing protein 48 homolog (668 aa).

WD repeat units follow at residues 26 to 65, 71 to 110, 113 to 152, 164 to 203, 206 to 245, 248 to 287, 290 to 329, and 350 to 389; these read QHRNGVNALQLDANNGKLYSAGRDAIIRVWNTRTDSSEKY, HHNDWVNDIVLCCNGRNLISASCDTTVKVWNAQKGFCMST, THRDYVQALAYAKDREQVASAGLDKAIFLWDVNTLTALTA, GSKDSIYSLAMNPSGTVIVSGSTENILRIWDPRTCMRRMK, GHTENVRCLVVSPDGNQVVSGSSDGTIKVWNLGQQRCVQT, VHKEGVWSLLMSENFQYIISGSRDRNIIVTEMRNPSNKTL, EEQAPVLSLGYNIDKTGVWATTWNSDIRCWKLPMYDRCTL, and KGGAAIKECAVLNDKRYIITKDSQDQVVVYDVLRVVKKEQ. Positions 592–616 are disordered; it reads ETTPSGGNANNSLQNSQSDANSEGS.

This sequence belongs to the WD repeat WDR48 family. Catalytic component of the Usp12-46 deubiquitylase complex consisting of Usp12-46, Wdr20 and Uaf1; regulatory subunit that, together wtih Wdr20, stabilizes Usp12-46. The Usp12-46 deubiquitylase complex associates with arr/arrow; the interaction leads to deubiquitination and stabilization of arr/arrow.

In terms of biological role, regulatory component of the Usp12-46 deubiquitylase complex. activates deubiquitination by increasing the catalytic turnover without increasing the affinity of deubiquitinating enzymes for the substrate. The complex deubiquitylates the wg/wingless-signaling receptor arr/arrow, which stabilizes the receptor and increases its concentration at the cell surface; this enhances the sensitivity of cells to wg/wingless-signal stimulation. This increases the amplitude and spatial range of the signaling response to the wg/wingless morphogen gradient, facilitating the precise concentration-dependent regulation of its target genes. Together with Wdr20 and Usp12-46 required for wg/wingless-mediated signaling in the wing imaginal disc and for wg/wingless-dependent regulation of intestinal stem cell proliferation. This chain is WD repeat-containing protein 48 homolog, found in Drosophila melanogaster (Fruit fly).